The chain runs to 198 residues: Na(+)-translocating NADH-quinone reductase subunit E (198 aa).

Transmembrane regions (helical) follow at residues 11–31 (SIFI…FLAV), 39–59 (FGLG…NNLV), 77–97 (FLNF…LEMI), 110–130 (GIFL…SFMV), 140–160 (VVYG…LAGI), and 176–196 (LGIT…FSGV).

The protein belongs to the NqrDE/RnfAE family. Composed of six subunits; NqrA, NqrB, NqrC, NqrD, NqrE and NqrF.

The protein resides in the cell inner membrane. The enzyme catalyses a ubiquinone + n Na(+)(in) + NADH + H(+) = a ubiquinol + n Na(+)(out) + NAD(+). NQR complex catalyzes the reduction of ubiquinone-1 to ubiquinol by two successive reactions, coupled with the transport of Na(+) ions from the cytoplasm to the periplasm. NqrA to NqrE are probably involved in the second step, the conversion of ubisemiquinone to ubiquinol. The sequence is that of Na(+)-translocating NADH-quinone reductase subunit E from Vibrio anguillarum (Listonella anguillarum).